A 315-amino-acid chain; its full sequence is Small ribosomal subunit protein uS3 (315 aa).

Residues 38-106 (IRKMMSRGME…QVQLNILEVK (69 aa)) form the KH type-2 domain. Residues 211 to 315 (AEREAQEALQ…VANTPEKAEE (105 aa)) form a disordered region. Positions 222 to 232 (QTRRERPRRGP) are enriched in basic residues. A compositionally biased stretch (low complexity) spans 265 to 315 (APAETPAGEAAATEPTAPVAEPATAAASAPAEAASAPAEAAVANTPEKAEE).

Belongs to the universal ribosomal protein uS3 family. In terms of assembly, part of the 30S ribosomal subunit. Forms a tight complex with proteins S10 and S14.

In terms of biological role, binds the lower part of the 30S subunit head. Binds mRNA in the 70S ribosome, positioning it for translation. The sequence is that of Small ribosomal subunit protein uS3 from Frankia casuarinae (strain DSM 45818 / CECT 9043 / HFP020203 / CcI3).